The primary structure comprises 591 residues: L-fucose isomerase (591 aa).

Active-site proton acceptor residues include Glu-337 and Asp-361. Positions 337, 361, and 528 each coordinate Mn(2+).

It belongs to the L-fucose isomerase family. As to quaternary structure, homohexamer. Mn(2+) serves as cofactor.

It localises to the cytoplasm. The enzyme catalyses L-fucose = L-fuculose. The protein operates within carbohydrate degradation; L-fucose degradation; L-lactaldehyde and glycerone phosphate from L-fucose: step 1/3. Functionally, converts the aldose L-fucose into the corresponding ketose L-fuculose. The chain is L-fucose isomerase from Escherichia coli O17:K52:H18 (strain UMN026 / ExPEC).